The primary structure comprises 123 residues: MAITKEDILEAVGSLTVMELNDLVKAFEEKFGVSAAAVAVAGPAGAGAADAEEKTEFDVVLASAGDQKVGVIKVVRAITGLGLKEAKDIVDGAPKTIKEGVSKAEAEDIQKQLEEAGAKVEIK.

It belongs to the bacterial ribosomal protein bL12 family. As to quaternary structure, homodimer. Part of the ribosomal stalk of the 50S ribosomal subunit. Forms a multimeric L10(L12)X complex, where L10 forms an elongated spine to which 2 to 4 L12 dimers bind in a sequential fashion. Binds GTP-bound translation factors.

In terms of biological role, forms part of the ribosomal stalk which helps the ribosome interact with GTP-bound translation factors. Is thus essential for accurate translation. In Neisseria meningitidis serogroup C (strain 053442), this protein is Large ribosomal subunit protein bL12.